We begin with the raw amino-acid sequence, 130 residues long: Small ribosomal subunit protein uS11 (130 aa).

Belongs to the universal ribosomal protein uS11 family. Part of the 30S ribosomal subunit. Interacts with proteins S7 and S18. Binds to IF-3.

Functionally, located on the platform of the 30S subunit, it bridges several disparate RNA helices of the 16S rRNA. Forms part of the Shine-Dalgarno cleft in the 70S ribosome. This chain is Small ribosomal subunit protein uS11, found in Acholeplasma laidlawii (strain PG-8A).